The following is a 238-amino-acid chain: Orotidine 5'-phosphate decarboxylase (238 aa).

Residues Asp10, Lys32, 59–68, Thr122, Arg184, Gln193, Gly213, and Arg214 contribute to the substrate site; that span reads DLKLHDIPNT. The active-site Proton donor is Lys61.

This sequence belongs to the OMP decarboxylase family. Type 1 subfamily. Homodimer.

The catalysed reaction is orotidine 5'-phosphate + H(+) = UMP + CO2. It participates in pyrimidine metabolism; UMP biosynthesis via de novo pathway; UMP from orotate: step 2/2. Functionally, catalyzes the decarboxylation of orotidine 5'-monophosphate (OMP) to uridine 5'-monophosphate (UMP). This is Orotidine 5'-phosphate decarboxylase from Bacillus cereus (strain Q1).